The chain runs to 92 residues: Small ribosomal subunit protein uS17 (92 aa).

It belongs to the universal ribosomal protein uS17 family. As to quaternary structure, part of the 30S ribosomal subunit.

Its function is as follows. One of the primary rRNA binding proteins, it binds specifically to the 5'-end of 16S ribosomal RNA. This Corynebacterium glutamicum (strain ATCC 13032 / DSM 20300 / JCM 1318 / BCRC 11384 / CCUG 27702 / LMG 3730 / NBRC 12168 / NCIMB 10025 / NRRL B-2784 / 534) protein is Small ribosomal subunit protein uS17.